Reading from the N-terminus, the 144-residue chain is Transcription antitermination protein NusB (144 aa).

This sequence belongs to the NusB family.

Functionally, involved in transcription antitermination. Required for transcription of ribosomal RNA (rRNA) genes. Binds specifically to the boxA antiterminator sequence of the ribosomal RNA (rrn) operons. The chain is Transcription antitermination protein NusB from Streptomyces avermitilis (strain ATCC 31267 / DSM 46492 / JCM 5070 / NBRC 14893 / NCIMB 12804 / NRRL 8165 / MA-4680).